The chain runs to 641 residues: Chaperone protein DnaK (641 aa).

The residue at position 201 (threonine 201) is a Phosphothreonine; by autocatalysis. Residues 604–622 show a composition bias toward low complexity; that stretch reads ASAEQGGAAPGADAGNAGK. Residues 604–625 form a disordered region; sequence ASAEQGGAAPGADAGNAGKAQD.

The protein belongs to the heat shock protein 70 family.

Functionally, acts as a chaperone. This is Chaperone protein DnaK from Stenotrophomonas maltophilia (strain R551-3).